The following is a 258-amino-acid chain: NAD-dependent protein deacylase (258 aa).

The region spanning 3 to 258 is the Deacetylase sirtuin-type domain; sequence ERQLEKSIEH…LPALMRGLSA (256 aa). Position 28–48 (28–48) interacts with NAD(+); sequence GAGMSADSGLETYRDDKTGLW. Residues Tyr73 and Arg76 each coordinate substrate. 109–112 is an NAD(+) binding site; it reads QNID. Catalysis depends on His127, which acts as the Proton acceptor. Residues Cys135, Cys138, Cys161, and Cys164 each coordinate Zn(2+). Residues 201-203 and Ala245 contribute to the NAD(+) site; that span reads GTS.

This sequence belongs to the sirtuin family. Class III subfamily. It depends on Zn(2+) as a cofactor.

It is found in the cytoplasm. The catalysed reaction is N(6)-acetyl-L-lysyl-[protein] + NAD(+) + H2O = 2''-O-acetyl-ADP-D-ribose + nicotinamide + L-lysyl-[protein]. It catalyses the reaction N(6)-succinyl-L-lysyl-[protein] + NAD(+) + H2O = 2''-O-succinyl-ADP-D-ribose + nicotinamide + L-lysyl-[protein]. Functionally, NAD-dependent lysine deacetylase and desuccinylase that specifically removes acetyl and succinyl groups on target proteins. Modulates the activities of several proteins which are inactive in their acylated form. The protein is NAD-dependent protein deacylase of Corynebacterium glutamicum (strain ATCC 13032 / DSM 20300 / JCM 1318 / BCRC 11384 / CCUG 27702 / LMG 3730 / NBRC 12168 / NCIMB 10025 / NRRL B-2784 / 534).